Reading from the N-terminus, the 723-residue chain is Polyribonucleotide nucleotidyltransferase (723 aa).

Mg(2+) is bound by residues Asp488 and Asp494. The region spanning 555-614 (PKIITLNIKPEKIKDVIGPGGKQINAIIDETGVKIDIEQDGTVYIASQDQAMNRKAIAII) is the KH domain. One can recognise an S1 motif domain in the interval 624–692 (GEVYTGKVRR…QQGRVNLSRK (69 aa)). The disordered stretch occupies residues 692–723 (KALLEKKEQPEGDKKPQAEKKFYPKTKKPESK). The segment covering 693-723 (ALLEKKEQPEGDKKPQAEKKFYPKTKKPESK) has biased composition (basic and acidic residues).

The protein belongs to the polyribonucleotide nucleotidyltransferase family. It depends on Mg(2+) as a cofactor.

The protein resides in the cytoplasm. It catalyses the reaction RNA(n+1) + phosphate = RNA(n) + a ribonucleoside 5'-diphosphate. Its function is as follows. Involved in mRNA degradation. Catalyzes the phosphorolysis of single-stranded polyribonucleotides processively in the 3'- to 5'-direction. The polypeptide is Polyribonucleotide nucleotidyltransferase (Listeria monocytogenes serovar 1/2a (strain ATCC BAA-679 / EGD-e)).